The following is an 85-amino-acid chain: U4-theraphotoxin-Hhn1e (85 aa).

The N-terminal stretch at 1-22 (MKVTLIAILTCAAVLVLHTTAA) is a signal peptide. A propeptide spanning residues 23–48 (EELEAESQLMEVGMPDTELAAVDEER) is cleaved from the precursor. 3 disulfides stabilise this stretch: Cys52/Cys66, Cys56/Cys77, and Cys71/Cys82.

Belongs to the neurotoxin 12 (Hwtx-2) family. 02 (Hwtx-2) subfamily. In terms of tissue distribution, expressed by the venom gland.

It localises to the secreted. In terms of biological role, postsynaptic neurotoxin. The polypeptide is U4-theraphotoxin-Hhn1e (Cyriopagopus hainanus (Chinese bird spider)).